We begin with the raw amino-acid sequence, 245 residues long: Flagellar basal-body rod protein FlgF (245 aa).

It belongs to the flagella basal body rod proteins family. In terms of assembly, the basal body constitutes a major portion of the flagellar organelle and consists of five rings (E,L,P,S, and M) mounted on a central rod. The rod consists of about 26 subunits of FlgG in the distal portion, and FlgB, FlgC and FlgF are thought to build up the proximal portion of the rod with about 6 subunits each.

It is found in the bacterial flagellum basal body. The chain is Flagellar basal-body rod protein FlgF (flgF) from Caulobacter vibrioides (strain ATCC 19089 / CIP 103742 / CB 15) (Caulobacter crescentus).